The primary structure comprises 506 residues: Maturase K (506 aa).

Belongs to the intron maturase 2 family. MatK subfamily.

Its subcellular location is the plastid. It is found in the chloroplast. Usually encoded in the trnK tRNA gene intron. Probably assists in splicing its own and other chloroplast group II introns. This is Maturase K from Prunus dulcis (Almond).